The following is a 117-amino-acid chain: Large ribosomal subunit protein bL20 (117 aa).

The protein belongs to the bacterial ribosomal protein bL20 family.

Functionally, binds directly to 23S ribosomal RNA and is necessary for the in vitro assembly process of the 50S ribosomal subunit. It is not involved in the protein synthesizing functions of that subunit. The protein is Large ribosomal subunit protein bL20 of Leptospira interrogans serogroup Icterohaemorrhagiae serovar copenhageni (strain Fiocruz L1-130).